The following is a 45-amino-acid chain: Large ribosomal subunit protein bL34 (45 aa).

Belongs to the bacterial ribosomal protein bL34 family.

This Frankia casuarinae (strain DSM 45818 / CECT 9043 / HFP020203 / CcI3) protein is Large ribosomal subunit protein bL34.